The chain runs to 403 residues: MAKLIVSDVDVKDKKVLVRVDFNVPIKDGVIGDDNRIVAALPTIKYIIENGGKAILLSHLGRIKSDEDKKSLSLAPVAKRLGELLEKPVTFVPSNEGKEVEDAINNMKDGDVVVLENTRFQDIDNDFGKRESKNDPKLGEYWASLGDVFVNDAFGTAHRSHASNVGIATAMKAAGKPVAAGFLLEKEIKFLGNAVANPVHPFVTILGGAKVSDKIGVITNLIPKADHIIIGGGMAYTFLKAQGHNIGKSLVEDDKVEFAKELLEKAGDKLVLPIDHVAATEFNNDAASEVVGQDIPDNEMGLDIGPKTIELFKKTLEGAKTVVWNGPMGVFEMPNFAKGTLEVGRALADLPDATTIVGGGDSTAAAKQLGIAPKLTHISTGGGASLEYLEGKELPGIACVSDK.

Substrate is bound by residues 21–23, R36, 59–62, R119, and R159; these read DFN and HLGR. Residues K214, G301, E332, and 359–362 contribute to the ATP site; that span reads GGDS.

It belongs to the phosphoglycerate kinase family. Monomer.

It is found in the cytoplasm. It carries out the reaction (2R)-3-phosphoglycerate + ATP = (2R)-3-phospho-glyceroyl phosphate + ADP. Its pathway is carbohydrate degradation; glycolysis; pyruvate from D-glyceraldehyde 3-phosphate: step 2/5. This Lactobacillus delbrueckii subsp. lactis protein is Phosphoglycerate kinase.